The following is a 368-amino-acid chain: Forkhead box protein I2 (368 aa).

The interval 33–54 is disordered; that stretch reads QNQQLPQRPAAPPALGYGRNEY. Residues 124-218 constitute a DNA-binding region (fork-head); that stretch reads RPPYSYSSLI…DNGNFRRKRK (95 aa). Residues 243-272 form a disordered region; sequence SLGSDSPRGASALEQSSYGTPESKSRPAGG. Over residues 255-264 the composition is skewed to polar residues; sequence LEQSSYGTPE.

The protein localises to the nucleus. Possible transcriptional activator. This chain is Forkhead box protein I2, found in Xenopus tropicalis (Western clawed frog).